Consider the following 89-residue polypeptide: Small ribosomal subunit protein uS15 (89 aa).

It belongs to the universal ribosomal protein uS15 family. In terms of assembly, part of the 30S ribosomal subunit. Forms a bridge to the 50S subunit in the 70S ribosome, contacting the 23S rRNA.

One of the primary rRNA binding proteins, it binds directly to 16S rRNA where it helps nucleate assembly of the platform of the 30S subunit by binding and bridging several RNA helices of the 16S rRNA. In terms of biological role, forms an intersubunit bridge (bridge B4) with the 23S rRNA of the 50S subunit in the ribosome. This chain is Small ribosomal subunit protein uS15, found in Salinispora arenicola (strain CNS-205).